We begin with the raw amino-acid sequence, 414 residues long: MNFLQKPRGVKDWFGDELVYFNWIVKKIRSLAFNWGFSEVKTPLFENAQLFQRSNANADIVQKELYQFFDKSQRELALRPEATTPIVRLACENKLMQEANFPLKLFCIGSMYRYERPQNNRFREHWQFSCEVFGFSNLFIFLDTLLFANSLLEALGITGYVLKINNLANFETLSKWNKALKDYLTPYKLELTELSQKRLEKNPLRILDDKIDQKKSFVKNAPKITDFLDASAKQDSELLKTQLKKHNISFEWTDNLVRGLDYYTGFVFEYVKNQDTILAGGVYDNLVEELSSNPTPALGFACGIERLINCLEIDKKAFILNTKPKQMLVICLFEEALEELVWLAKLWREYNQVTIYPKVIKVDNGIRLANRLGYTFIGIVGKTDFDKKAITIKNLVSKQQTIYTWNELGERNVF.

It belongs to the class-II aminoacyl-tRNA synthetase family. In terms of assembly, homodimer.

The protein resides in the cytoplasm. The catalysed reaction is tRNA(His) + L-histidine + ATP = L-histidyl-tRNA(His) + AMP + diphosphate + H(+). The polypeptide is Histidine--tRNA ligase (hisS) (Mycoplasma genitalium (strain ATCC 33530 / DSM 19775 / NCTC 10195 / G37) (Mycoplasmoides genitalium)).